The chain runs to 180 residues: Probable DNA replication complex GINS protein PSF2 (180 aa).

Belongs to the GINS2/PSF2 family. In terms of assembly, component of the GINS complex which is a heterotetramer of gins1, gins2, gins3 and gins4.

Its subcellular location is the nucleus. Required for correct functioning of the GINS complex, a complex that plays an essential role in the initiation of DNA replication, and progression of DNA replication forks. GINS complex is a core component of CDC45-MCM-GINS (CMG) helicase, the molecular machine that unwinds template DNA during replication, and around which the replisome is built. The polypeptide is Probable DNA replication complex GINS protein PSF2 (psf-2) (Caenorhabditis elegans).